The primary structure comprises 417 residues: UPF0761 membrane protein CV_0810 (417 aa).

7 consecutive transmembrane segments (helical) span residues Leu52–Phe72, Phe79–Tyr99, Leu110–Glu130, Met150–Trp170, Leu185–Leu205, Phe214–Thr234, and Ile258–Phe278.

It belongs to the UPF0761 family.

It is found in the cell inner membrane. This chain is UPF0761 membrane protein CV_0810, found in Chromobacterium violaceum (strain ATCC 12472 / DSM 30191 / JCM 1249 / CCUG 213 / NBRC 12614 / NCIMB 9131 / NCTC 9757 / MK).